Reading from the N-terminus, the 126-residue chain is MAQLPPEDIATMPAQKVVFNAPFDNKATYYVRIINPGTKRIGFAFKTTKPKRINMNPPNGVLGPKESVNVAISCDAFDPSSEDTKGDRVTVEWCNTPDPAAAAFKLEWFQGDGMVRRKNLPIEYNV.

Ala-2 carries the post-translational modification N-acetylalanine. The region spanning 8-125 is the MSP domain; the sequence is DIATMPAQKV…RRKNLPIEYN (118 aa).

As to expression, sperm.

The protein resides in the cell projection. It localises to the pseudopodium. The protein localises to the cytoplasm. It is found in the cytoskeleton. Central component in molecular interactions underlying sperm crawling. Forms an extensive filament system that extends from sperm villipoda, along the leading edge of the pseudopod. This chain is Major sperm protein 1 (MSP-1), found in Globodera rostochiensis (Golden nematode worm).